The primary structure comprises 1009 residues: Type VII secretion system accessory factor EsaA (1009 aa).

6 helical membrane passes run 7 to 27, 822 to 842, 869 to 889, 903 to 923, 928 to 948, and 979 to 999; these read IYAL…IFFV, ISPT…AYIF, VITS…VGLI, KFIL…TYLL, SIGM…MNNL, and IGLA…LNMF.

It belongs to the EsaA family. Homodimer. Interacts with EssB.

Its subcellular location is the cell membrane. In terms of biological role, component of the type VII secretion system (Ess). Provides together with EssB and other components such as EssC and EssE a secretion platform across the cytoplasmic membrane in the host. The polypeptide is Type VII secretion system accessory factor EsaA (Staphylococcus aureus (strain MSSA476)).